The following is an 896-amino-acid chain: MKVMDALQSGRRKPLPVALLCILVTVFCVLECHGADLTSPTKKSAPLRITKPQPTSQQAKPISITTRAPTTVASTTDDEVSSSVDGQLAPLISSTTEGPSSGTTASLVPEICLNGLQLTVNSADEGTVIRKQEEFVKILEGDVVLSVLTKDPDSALFVINRVNQANLIMADFEIGIRAISIDNASLAENLLIQEVQFLQQCTTYSMGIFVDWELYKQLESVIKDLEYNIWPIPGTRAHLFPKVAHLLHQMPWGEKIASVEIATETLEMYNEFMEAARQEHMCLMHFKSDDNVYIMFGNKLASHFKENGTLFSVPTDRTDDEFLADLPNRAFVLMENEIDLSTAVELDATPTALDEILIGKSVLPSRVLSFAGSIIDLMNWLRGSLSKHCKRGEEHDLYVLESCFNFLNFIEDWRTSEYRQAHDTAEILSLLLMRKLGTAMNFQMYQKKVLTLDKITGESRTELREIASQNFVTNVTTYYHYNRDNHTSLELKTKFGQVFNCQYSAGDNRRYPFLFDGESVMFWRIKMDTWVATGLTAAILGLIATLAILVFIVVRISLGDVFEGNPTTSILLLLSLILVFCSFVPYSIEYVGEQRNSHVTFEDAQTLNTLCAVRVFIMTLVYCFVFSLLLCRAVMLASIGSEGGFLSHVNGYIQAVICAFSVVAQVGMSVQLLVVMHVASETVSCENIYYGRWLWGLLAYDFALLCCVGALIPSIYRSQRNYREGILIVIGSVLIMVIWVAWIALSLFGDEWRDAAIPLGLQASGWAVLVGILIPRTFLIVRGIERSDIAQALPSLTSLAFAQNNQYSSEQSVYECVNPAMRHCSQDEVNHQSPSEIPTLPLRGGGPRRQQFFANLRQANANINPQRPPPRPQQSPSRSSVSSLPPSPDHNKITRF.

An N-terminal signal peptide occupies residues 1-31; sequence MKVMDALQSGRRKPLPVALLCILVTVFCVLE. Residues 32-530 lie on the Extracellular side of the membrane; sequence CHGADLTSPT…MFWRIKMDTW (499 aa). The interval 38 to 84 is disordered; it reads TSPTKKSAPLRITKPQPTSQQAKPISITTRAPTTVASTTDDEVSSSV. Residues 52 to 64 show a composition bias toward polar residues; that stretch reads PQPTSQQAKPISI. Residues 65-84 are compositionally biased toward low complexity; the sequence is TTRAPTTVASTTDDEVSSSV. N-linked (GlcNAc...) asparagine glycans are attached at residues Asn-183, Asn-307, Asn-474, and Asn-485. The next 7 membrane-spanning stretches (helical) occupy residues 531–554, 570–588, 615–637, 655–676, 693–712, 728–748, and 759–781; these read VATG…FIVV, ILLL…PYSI, VFIM…VMLA, AVIC…LVVM, WLWG…GALI, IVIG…LSLF, and LGLQ…FLIV. At 782-896 the chain is on the cytoplasmic side; the sequence is RGIERSDIAQ…SPDHNKITRF (115 aa). 2 disordered regions span residues 825 to 844 and 861 to 896; these read SQDE…PLRG and ANIN…ITRF. The span at 874-884 shows a compositional bias: low complexity; the sequence is QSPSRSSVSSL.

This sequence belongs to the G-protein coupled receptor 3 family. As to expression, expressed exclusively by R8 photoreceptor cells and is internalized in a sev-dependent manner by R7 cells.

The protein localises to the cell membrane. Its function is as follows. Acts as a ligand for sevenless tyrosine-kinase receptor during eye development. The protein is Protein bride of sevenless (boss) of Drosophila melanogaster (Fruit fly).